The sequence spans 135 residues: MGVRKRERAEQIKEAKKQVAFAKLNNCPTSPRKMRLMADLVRGEKVEKALHILKFSKKEASNRLEKLLVSAIANWQAKNEDANLEEAELFVKEIRVDGGSMLKRLRPAPQGRAHRIRKRSNHVTLVLGANNNTQS.

The protein belongs to the universal ribosomal protein uL22 family. Part of the 50S ribosomal subunit.

In terms of biological role, this protein binds specifically to 23S rRNA; its binding is stimulated by other ribosomal proteins, e.g. L4, L17, and L20. It is important during the early stages of 50S assembly. It makes multiple contacts with different domains of the 23S rRNA in the assembled 50S subunit and ribosome. Functionally, the globular domain of the protein is located near the polypeptide exit tunnel on the outside of the subunit, while an extended beta-hairpin is found that lines the wall of the exit tunnel in the center of the 70S ribosome. The polypeptide is Large ribosomal subunit protein uL22 (Christiangramia forsetii (strain DSM 17595 / CGMCC 1.15422 / KT0803) (Gramella forsetii)).